Consider the following 153-residue polypeptide: Transcriptional repressor NrdR (153 aa).

A zinc finger spans residues 3–34 (CPSCQHHGTRVLDSRPVDEGRSIRRRRECEQC). The ATP-cone domain occupies 49-139 (LIVVKKQGMR…VYRQFKDLNV (91 aa)).

The protein belongs to the NrdR family. Zn(2+) is required as a cofactor.

In terms of biological role, negatively regulates transcription of bacterial ribonucleotide reductase nrd genes and operons by binding to NrdR-boxes. The sequence is that of Transcriptional repressor NrdR from Geobacillus sp. (strain WCH70).